Reading from the N-terminus, the 340-residue chain is MALRLLRRAARGAAAAALLRLKASLAADIPRLGYSSSSHHKYIPRRAVLYVPGNDEKKIKKIPSLNVDCAVLDCEDGVAANKKNEARLRIVKTLEDIDLGPTEKCVRVNSVSSGLAEEDLETLLQSRVLPSSLMLPKVESPEEIQWFADKFSFHLKGRKLEQPMNLIPFVETAMGLLNFKAVCEETLKVGPQVGLFLDAVVFGGEDFRASIGATSSKETLDILYARQKIVVIAKAFGLQAIDLVYIDFRDGAGLLRQSREGAAMGFTGKQVIHPNQIAVVQEQFSPSPEKIKWAEELIAAFKEHQQLGKGAFTFQGSMIDMPLLKQAQNTVTLATSIKEK.

Residues 1–22 (MALRLLRRAARGAAAAALLRLK) constitute a mitochondrion transit peptide. The substrate site is built by Y50, K57, and K61. N6-acetyllysine is present on residues K57 and K61. Residues K82 and K92 each carry the N6-acetyllysine; alternate modification. 2 positions are modified to N6-succinyllysine; alternate: K82 and K92. Position 107 (R107) interacts with substrate. 2 residues coordinate Mg(2+): E171 and D206. 272–273 (IH) contributes to the substrate binding site. An N6-succinyllysine modification is found at K309. Residue D320 is part of the active site.

The protein belongs to the HpcH/HpaI aldolase family. Citrate lyase beta subunit-like subfamily. Homotrimer. Mg(2+) serves as cofactor.

The protein resides in the mitochondrion. The catalysed reaction is glyoxylate + acetyl-CoA + H2O = (S)-malate + CoA + H(+). The enzyme catalyses propanoyl-CoA + glyoxylate + H2O = 3-methylmalate + CoA + H(+). It carries out the reaction (3S)-citramalyl-CoA = pyruvate + acetyl-CoA. It catalyses the reaction (S)-malyl-CoA + H2O = (S)-malate + CoA + H(+). In terms of biological role, mitochondrial citramalyl-CoA lyase indirectly involved in the vitamin B12 metabolism. Converts citramalyl-CoA into acetyl-CoA and pyruvate in the C5-dicarboxylate catabolism pathway. The C5-dicarboxylate catabolism pathway is required to detoxify itaconate, a vitamin B12-poisoning metabolite. Also acts as a malate synthase in vitro, converting glyoxylate and acetyl-CoA to malate. Also displays malyl-CoA thioesterase activity. Also acts as a beta-methylmalate synthase in vitro, by mediating conversion of glyoxylate and propionyl-CoA to beta-methylmalate. Also has very weak citramalate synthase activity in vitro. The polypeptide is Citramalyl-CoA lyase, mitochondrial (Homo sapiens (Human)).